Here is a 90-residue protein sequence, read N- to C-terminus: Elongation factor 1-beta (90 aa).

It belongs to the EF-1-beta/EF-1-delta family.

Its function is as follows. Promotes the exchange of GDP for GTP in EF-1-alpha/GDP, thus allowing the regeneration of EF-1-alpha/GTP that could then be used to form the ternary complex EF-1-alpha/GTP/AAtRNA. The protein is Elongation factor 1-beta of Staphylothermus marinus (strain ATCC 43588 / DSM 3639 / JCM 9404 / F1).